The sequence spans 212 residues: EFC-associated protein OPG053 (212 aa).

The Virion surface segment spans residues 1–175 (MAETKEFKTL…IIENRLPYYD (175 aa)). 3 disulfides stabilise this stretch: Cys-33-Cys-55, Cys-47-Cys-127, and Cys-107-Cys-149. The chain crosses the membrane as a helical span at residues 176 to 196 (PWFLVGVAIILVIFTVAICSI). Residues 197 to 212 (RRNLALKYRYGTFLYV) lie on the Intravirion side of the membrane.

The protein belongs to the orthopoxvirus OPG053 family. As to quaternary structure, component of the entry fusion complex (EFC) composed of OPG053, OPG076, OPG086, OPG094, OPG095, OPG099, OPG107, OPG143, OPG104, OPG147 and OPG155. Except for OPG095 and OPG052, each of the EFC proteins is required for assembly or stability of the complex. In terms of processing, disulfid bonds are oxidized in the cytoplasm by OPG088 protein. Unglycosylated because produced in viral factories instead of the classic ER -Golgi route.

The protein resides in the virion membrane. Functionally, component of the entry fusion complex (EFC), which consists of 11 proteins. During cell infection, this complex mediates entry of the virion core into the host cytoplasm by a two-step mechanism consisting of lipid mixing of the viral and cellular membranes and subsequent pore formation. This Homo sapiens (Human) protein is EFC-associated protein OPG053 (OPG053).